The sequence spans 520 residues: Alkyl hydroperoxide reductase subunit F (520 aa).

FAD is bound at residue Asp213–Ile228. A disulfide bridge connects residues Cys343 and Cys346. Residue Arg355 to Ala369 participates in NAD(+) binding. Thr476–Asp486 provides a ligand contact to FAD.

Belongs to the class-II pyridine nucleotide-disulfide oxidoreductase family. Homodimer. The cofactor is FAD.

In terms of biological role, serves to protect the cell against DNA damage by alkyl hydroperoxides. It can use either NADH or NADPH as electron donor for direct reduction of redox dyes or of alkyl hydroperoxides when combined with the AhpC protein. The polypeptide is Alkyl hydroperoxide reductase subunit F (ahpF) (Pseudomonas putida (Arthrobacter siderocapsulatus)).